The sequence spans 597 residues: Aspartate--tRNA(Asp/Asn) ligase (597 aa).

An L-aspartate-binding site is contributed by E175. The aspartate stretch occupies residues Q199–K202. L-aspartate contacts are provided by R221 and H454. R221–E223 contributes to the ATP binding site. E488 contributes to the ATP binding site. R495 lines the L-aspartate pocket. G540–R543 is a binding site for ATP.

Belongs to the class-II aminoacyl-tRNA synthetase family. Type 1 subfamily. Homodimer.

It is found in the cytoplasm. The catalysed reaction is tRNA(Asx) + L-aspartate + ATP = L-aspartyl-tRNA(Asx) + AMP + diphosphate. Its function is as follows. Aspartyl-tRNA synthetase with relaxed tRNA specificity since it is able to aspartylate not only its cognate tRNA(Asp) but also tRNA(Asn). Reaction proceeds in two steps: L-aspartate is first activated by ATP to form Asp-AMP and then transferred to the acceptor end of tRNA(Asp/Asn). The sequence is that of Aspartate--tRNA(Asp/Asn) ligase from Bartonella quintana (strain Toulouse) (Rochalimaea quintana).